The primary structure comprises 188 residues: UPF0301 protein PsycPRwf_0144 (188 aa).

This sequence belongs to the UPF0301 (AlgH) family.

This chain is UPF0301 protein PsycPRwf_0144, found in Psychrobacter sp. (strain PRwf-1).